Here is a 92-residue protein sequence, read N- to C-terminus: Putative defensin-like protein 225 (92 aa).

Positions 1 to 26 are cleaved as a signal peptide; that stretch reads MKYGVLFMVSCGVMFLILSHVEEVEA. 3 disulfide bridges follow: cysteine 32–cysteine 92, cysteine 42–cysteine 70, and cysteine 68–cysteine 88.

The protein belongs to the DEFL family.

It is found in the secreted. The chain is Putative defensin-like protein 225 (SCRL1) from Arabidopsis thaliana (Mouse-ear cress).